The following is a 218-amino-acid chain: Nuclear cap-binding protein subunit 2 (218 aa).

MRNA is bound by residues tyrosine 24, tyrosine 49, threonine 118–aspartate 122, arginine 129–arginine 133, and glutamine 139–valine 140. The 79-residue stretch at alanine 46–glycine 124 folds into the RRM domain. Basic residues predominate over residues aspartate 176–glutamine 194. Residues aspartate 176–alanine 200 form a disordered region.

Belongs to the RRM NCBP2 family. Component of the nuclear cap-binding complex (CBC).

Its subcellular location is the nucleus. Its function is as follows. Component of the cap-binding complex (CBC) involved in the nuclear export of capped U snRNAs. The CBC complex is required for efficient pre-mRNA splicing through efficient commitment complex and spliceosome formation; and involved in rRNA processing at sites A0, A1 and A2. This is Nuclear cap-binding protein subunit 2 (CBC2) from Eremothecium gossypii (strain ATCC 10895 / CBS 109.51 / FGSC 9923 / NRRL Y-1056) (Yeast).